The following is a 617-amino-acid chain: MQNKYPLLSQIDSPEDLRLLGKEDLSALANELRTYLLDSVSQTSGHLASGLGVVELTVALHYVYQTPFDQLIWDVGHQAYPHKILTGRRDQMHTIRQKNGIHPFPWREESPYDVLSVGHSSTSISAGLGIAVAAQKENAGRKTVCVIGDGAITAGMAFEAMNHAGALHTDMLVILNDNEMSISENVGALNNHLARIFSGSLYTSMRDGSKKVLDKVPTIKNFMKKSEEHMKGVIFSPDSTLFEELGFNYIGPIDGHNIEELVKTLTNMRELKGPQFLHVRTKKGKGYEPAENDPISYHGVPRFDPASGKLPQSKIVPTYSDIFGNWLCEMAENDEKIIGITPAMREGSGMVEFSKRFPTQYFDVAIAEQHAVTFAAGLAIAGYKPVVAIYSTFLQRAYDQLIHDIAIQNLPVIFAIDRAGVVGADGQTHQGAFDLSFMRCIPNMTIMCPADENEMHQMLYTAYKMQTPTAIRYPRGNARGIALQPMAELAVGKARIIHQGKKVAILNFGALLSEAQEVAISHNYTLVDMRFVKPLDKTLISELADSHSLLVTLEENAIQGGAGSAVNEYLQQIGKIKPLVLIGLPDMFIPQSTQQESYADFGLDAKGIDQKIKLALS.

Thiamine diphosphate-binding positions include H77 and 118-120; that span reads GHS. D149 is a binding site for Mg(2+). Thiamine diphosphate is bound by residues 150-151, N178, Y287, and E368; that span reads GA. N178 serves as a coordination point for Mg(2+).

This sequence belongs to the transketolase family. DXPS subfamily. Homodimer. Requires Mg(2+) as cofactor. It depends on thiamine diphosphate as a cofactor.

It catalyses the reaction D-glyceraldehyde 3-phosphate + pyruvate + H(+) = 1-deoxy-D-xylulose 5-phosphate + CO2. The protein operates within metabolic intermediate biosynthesis; 1-deoxy-D-xylulose 5-phosphate biosynthesis; 1-deoxy-D-xylulose 5-phosphate from D-glyceraldehyde 3-phosphate and pyruvate: step 1/1. Its function is as follows. Catalyzes the acyloin condensation reaction between C atoms 2 and 3 of pyruvate and glyceraldehyde 3-phosphate to yield 1-deoxy-D-xylulose-5-phosphate (DXP). The sequence is that of 1-deoxy-D-xylulose-5-phosphate synthase from Haemophilus ducreyi (strain 35000HP / ATCC 700724).